Here is a 163-residue protein sequence, read N- to C-terminus: UPF0416 protein RBE_1121 (163 aa).

Belongs to the UPF0416 family.

This is UPF0416 protein RBE_1121 from Rickettsia bellii (strain RML369-C).